Here is a 238-residue protein sequence, read N- to C-terminus: Phosphoribosylaminoimidazole-succinocarboxamide synthase (238 aa).

The protein belongs to the SAICAR synthetase family.

It catalyses the reaction 5-amino-1-(5-phospho-D-ribosyl)imidazole-4-carboxylate + L-aspartate + ATP = (2S)-2-[5-amino-1-(5-phospho-beta-D-ribosyl)imidazole-4-carboxamido]succinate + ADP + phosphate + 2 H(+). It functions in the pathway purine metabolism; IMP biosynthesis via de novo pathway; 5-amino-1-(5-phospho-D-ribosyl)imidazole-4-carboxamide from 5-amino-1-(5-phospho-D-ribosyl)imidazole-4-carboxylate: step 1/2. This Methanococcoides burtonii (strain DSM 6242 / NBRC 107633 / OCM 468 / ACE-M) protein is Phosphoribosylaminoimidazole-succinocarboxamide synthase.